A 254-amino-acid polypeptide reads, in one-letter code: Protein GltF (254 aa).

Residues 1 to 25 (MFFKKNLTTAAICAALSVAAFSAMA) form the signal peptide. Residues 213–229 (PVAITAVTFPLLIDAAV) traverse the membrane as a helical segment.

It to E.coli YhcF.

The protein localises to the cell membrane. Its function is as follows. Involved in induction of the so-called NTR enzymes in response to nitrogen deprivation, as well as in glutamate biosynthesis. May mediate the glutamate-dependent repression of the GLT operon. The sequence is that of Protein GltF (gltF) from Escherichia coli (strain K12).